A 388-amino-acid polypeptide reads, in one-letter code: Na(+)/H(+) antiporter NhaA (388 aa).

At 1 to 11 the chain is on the cytoplasmic side; it reads MKHLHRFFSSD. The chain crosses the membrane as a helical span at residues 12–31; that stretch reads ASGGIILIIAAVLAMIMANS. Residues 32-58 are Periplasmic-facing; it reads GATSGWYHDFLETPVQLRVGTLEINKN. The chain crosses the membrane as a helical span at residues 59–80; it reads MLLWINDALMAVFFLLVGLEVK. At 81-96 the chain is on the cytoplasmic side; it reads RELMQGSLASLRQAAF. A helical transmembrane segment spans residues 97–116; the sequence is PVIAAIGGMIVPALLYLAFN. The Periplasmic segment spans residues 117–122; the sequence is YADPIT. The chain crosses the membrane as a helical span at residues 123–130; it reads REGWAIPA. The Cytoplasmic segment spans residues 131–154; it reads ATDIAFALGVLALLGSRVPLALKI. Residues 155–176 traverse the membrane as a helical segment; sequence FLMALAIIDDLGAIIIIALFYT. The Periplasmic segment spans residues 177–180; it reads NDLS. A helical membrane pass occupies residues 181–200; it reads MASLGVAAVAIAVLVVLNLC. Residues 201–204 lie on the Cytoplasmic side of the membrane; it reads GVRR. The helical transmembrane segment at 205 to 222 threads the bilayer; the sequence is TGVYILVGVVLWTAVLKS. A topological domain (periplasmic) is located at residue G223. The helical transmembrane segment at 224-236 threads the bilayer; sequence VHATLAGVIVGFF. The Cytoplasmic portion of the chain corresponds to 237–253; it reads IPLKEKHGRSPAKRLEH. The chain crosses the membrane as a helical span at residues 254–272; it reads VLHPWVAYLILPLFAFANA. The Periplasmic segment spans residues 273–286; the sequence is GVSLQGVTLEGLTS. The helical transmembrane segment at 287 to 310 threads the bilayer; the sequence is ILPLGIIAGLLIGKPLGISLFCWL. Residues 311–339 lie on the Cytoplasmic side of the membrane; sequence ALRLKLAHLPEGTTYQQIMAVGILCGIGF. A helical membrane pass occupies residues 340–350; sequence TMSIFIASLAF. Topologically, residues 351 to 357 are periplasmic; that stretch reads GSVDPEL. Residues 358–380 traverse the membrane as a helical segment; that stretch reads INWAKLGILVGSISSAVIGYSWL. At 381–388 the chain is on the cytoplasmic side; the sequence is RVRLRPSV.

Belongs to the NhaA Na(+)/H(+) (TC 2.A.33) antiporter family.

It is found in the cell inner membrane. The catalysed reaction is Na(+)(in) + 2 H(+)(out) = Na(+)(out) + 2 H(+)(in). In terms of biological role, na(+)/H(+) antiporter that extrudes sodium in exchange for external protons. The polypeptide is Na(+)/H(+) antiporter NhaA (Escherichia coli O1:K1 / APEC).